The following is a 206-amino-acid chain: Probable glutathione S-transferase 6 (206 aa).

The region spanning 2–79 (VHYKLVYFPL…YLAREFGIAG (78 aa)) is the GST N-terminal domain. Glutathione contacts are provided by residues Tyr8, Trp39, Lys43, 49–51 (GQL), and 63–64 (QS). In terms of domain architecture, GST C-terminal spans 81–206 (NDTEAAEVDA…YIANRPDYPF (126 aa)).

It belongs to the GST superfamily. Sigma family.

It carries out the reaction RX + glutathione = an S-substituted glutathione + a halide anion + H(+). Conjugation of reduced glutathione to a wide number of exogenous and endogenous hydrophobic electrophiles. The sequence is that of Probable glutathione S-transferase 6 (gst-6) from Caenorhabditis elegans.